A 187-amino-acid chain; its full sequence is GTP cyclohydrolase 1 (187 aa).

Positions 79, 82, and 150 each coordinate Zn(2+).

Belongs to the GTP cyclohydrolase I family. In terms of assembly, toroid-shaped homodecamer, composed of two pentamers of five dimers.

The enzyme catalyses GTP + H2O = 7,8-dihydroneopterin 3'-triphosphate + formate + H(+). The protein operates within cofactor biosynthesis; 7,8-dihydroneopterin triphosphate biosynthesis; 7,8-dihydroneopterin triphosphate from GTP: step 1/1. The chain is GTP cyclohydrolase 1 from Fusobacterium nucleatum subsp. nucleatum (strain ATCC 25586 / DSM 15643 / BCRC 10681 / CIP 101130 / JCM 8532 / KCTC 2640 / LMG 13131 / VPI 4355).